The following is a 681-amino-acid chain: Chaperone protein htpG (681 aa).

The tract at residues 1–326 (MQKGNIGVTT…SPDIPLNVSR (326 aa)) is a; substrate-binding. The b stretch occupies residues 327 to 545 (SYLQSDSNVK…YMRRMKEMAN (219 aa)). The tract at residues 546-681 (IQAGMSFYGE…NFVKRSIELI (136 aa)) is c. Residues 601–620 (DALKKKQEGKKDEDIPTAEK) are disordered.

The protein belongs to the heat shock protein 90 family. Homodimer.

The protein localises to the cytoplasm. In terms of biological role, molecular chaperone. Has ATPase activity. The polypeptide is Chaperone protein htpG (Bacteroides fragilis (strain 638R)).